We begin with the raw amino-acid sequence, 253 residues long: Troponin T, fast skeletal muscle isoforms (253 aa).

Positions 1 to 25 (MSDTEEVEHGEEEYEEEEEVQEEEV) are enriched in acidic residues. Disordered regions lie at residues 1–58 (MSDT…DIQK) and 97–178 (RAER…VLAE). Serine 2 carries the N-acetylserine modification. Composition is skewed to basic and acidic residues over residues 46–58 (PEGE…DIQK), 97–139 (RAER…DDLK), and 167–178 (TARETKKKVLAE).

The protein belongs to the troponin T family.

In terms of biological role, troponin T is the tropomyosin-binding subunit of troponin, the thin filament regulatory complex which confers calcium-sensitivity to striated muscle actomyosin ATPase activity. This chain is Troponin T, fast skeletal muscle isoforms (TNNT3), found in Coturnix japonica (Japanese quail).